The following is a 538-amino-acid chain: Lipid scramblase CLPTM1L (538 aa).

Over 1–10 (MWSGRSSFTS) the chain is Cytoplasmic. A helical transmembrane segment spans residues 11–31 (LVVGVFVVYVVHTCWVMYGIV). Over 32–284 (YTRPCSGDAN…VKGIFVDTNL (253 aa)) the chain is Extracellular. Residues Asn91 and Asn101 are each glycosylated (N-linked (GlcNAc...) asparagine). The helical transmembrane segment at 285-305 (YFLALTFFVAAFHLLFDFLAF) threads the bilayer. Residues 306 to 324 (KNDISFWKKKKSMIGMSTK) are Cytoplasmic-facing. The helical transmembrane segment at 325–342 (AVLWRCFSTVVIFLFLLD) threads the bilayer. At 343–346 (EQTS) the chain is on the extracellular side. Residues 347–364 (LLVLVPAGVGAAIELWKV) traverse the membrane as a helical segment. The Cytoplasmic segment spans residues 365–402 (KKALKMTILWRGLMPEFELGTYSESERKTEEYDTQAMK). A helical transmembrane segment spans residues 403 to 423 (YLSYLLYPLCVGGAVYSLLNI). The Extracellular portion of the chain corresponds to 424–428 (KYKSW). The chain crosses the membrane as a helical span at residues 429–449 (YSWLINSFVNGVYAFGFLFML). Over 450-538 (PQLFVNYKLK…EKAARAPHTD (89 aa)) the chain is Cytoplasmic.

The protein belongs to the CLPTM1 family.

Its subcellular location is the endoplasmic reticulum membrane. It catalyses the reaction a 6-(alpha-D-glucosaminyl)-1-(1,2-diacyl-sn-glycero-3-phospho)-1D-myo-inositol(in) = a 6-(alpha-D-glucosaminyl)-1-(1,2-diacyl-sn-glycero-3-phospho)-1D-myo-inositol(out). The enzyme catalyses 6-(alpha-D-glucosaminyl)-(1-octadecanoyl,2-(9Z)-octadecenoyl-sn-glycero-3-phospho)-1D-myo-inositol(in) = 6-(alpha-D-glucosaminyl)-(1-octadecanoyl,2-(9Z)-octadecenoyl-sn-glycero-3-phospho)-1D-myo-inositol(out). It carries out the reaction a 1,2-diacyl-sn-glycero-3-phospho-(1D-myo-inositol)(in) = a 1,2-diacyl-sn-glycero-3-phospho-(1D-myo-inositol)(out). The catalysed reaction is a 1,2-diacyl-sn-glycero-3-phosphocholine(in) = a 1,2-diacyl-sn-glycero-3-phosphocholine(out). It catalyses the reaction a 1,2-diacyl-sn-glycero-3-phosphoethanolamine(in) = a 1,2-diacyl-sn-glycero-3-phosphoethanolamine(out). Scramblase that mediates the translocation of glucosaminylphosphatidylinositol (alpha-D-GlcN-(1-6)-(1,2-diacyl-sn-glycero-3-phospho)-1D-myo-inositol, GlcN-PI) across the endoplasmic reticulum (ER) membrane, from the cytosolic leaflet to the luminal leaflet of the ER membrane, where it participates in the biosynthesis of glycosylphosphatidylinositol (GPI). GPI is a lipid glycoconjugate involved in post-translational modification of proteins. Can also translocate 1,2-diacyl-sn-glycero-3-phospho-(1D-myo-inositol) (phosphatidylinositol or PI), as well as several other phospholipids (1,2-diacyl-sn-glycero-3-phosphocholine, 1,2-diacyl-sn-glycero-3-phosphoethanolamine), and N-acetylglucosaminylphosphatidylinositol (GlcNAc-PI) in vitro. The protein is Lipid scramblase CLPTM1L (CLPTM1L) of Pongo abelii (Sumatran orangutan).